Here is a 222-residue protein sequence, read N- to C-terminus: ATP-dependent dethiobiotin synthetase BioD (222 aa).

12-17 contacts ATP; it reads DAGKTV. Residue Thr-16 participates in Mg(2+) binding. The active site involves Lys-37. Substrate is bound at residue Ser-41. Residues Asp-54, 116-119, 176-177, 206-208, and Glu-213 each bind ATP; these read EGAG, VQ, and PYL. Residues Asp-54 and Glu-116 each coordinate Mg(2+).

This sequence belongs to the dethiobiotin synthetase family. As to quaternary structure, homodimer. The cofactor is Mg(2+).

Its subcellular location is the cytoplasm. The catalysed reaction is (7R,8S)-7,8-diammoniononanoate + CO2 + ATP = (4R,5S)-dethiobiotin + ADP + phosphate + 3 H(+). The protein operates within cofactor biosynthesis; biotin biosynthesis; biotin from 7,8-diaminononanoate: step 1/2. In terms of biological role, catalyzes a mechanistically unusual reaction, the ATP-dependent insertion of CO2 between the N7 and N8 nitrogen atoms of 7,8-diaminopelargonic acid (DAPA, also called 7,8-diammoniononanoate) to form a ureido ring. This Idiomarina loihiensis (strain ATCC BAA-735 / DSM 15497 / L2-TR) protein is ATP-dependent dethiobiotin synthetase BioD.